The following is a 376-amino-acid chain: Carbapenem antibiotics biosynthesis protein CarD (376 aa).

It belongs to the proline oxidase family.

The protein operates within antibiotic biosynthesis; carbapenem biosynthesis. The protein is Carbapenem antibiotics biosynthesis protein CarD (carD) of Pectobacterium carotovorum subsp. carotovorum (Erwinia carotovora subsp. carotovora).